The primary structure comprises 140 residues: Baculoviral IAP repeat-containing protein 5 (140 aa).

Residues 18–88 form a BIR repeat; sequence RIATFKNWPF…KHSPGCAFLT (71 aa). At lysine 23 the chain carries N6-acetyllysine. Threonine 34 carries the post-translational modification Phosphothreonine; by CDK1 and CDK15. Threonine 48 bears the Phosphothreonine mark. Residues cysteine 57, cysteine 60, glutamate 76, histidine 77, histidine 80, and cysteine 84 each coordinate Zn(2+). N6-acetyllysine is present on residues lysine 90, lysine 110, lysine 112, and lysine 115. The segment covering 113-129 has biased composition (basic and acidic residues); the sequence is IAKETNNKQKEFEETAK. A disordered region spans residues 113–140; sequence IAKETNNKQKEFEETAKTTRQSIEQLAA. Position 117 is a phosphothreonine; by AURKB (threonine 117). N6-acetyllysine is present on lysine 129. Polar residues predominate over residues 130–140; sequence TTRQSIEQLAA.

Belongs to the IAP family. In terms of assembly, monomer or homodimer. Exists as a homodimer in the apo state and as a monomer in the CPC-bound state. The monomer protects cells against apoptosis more efficiently than the dimer. Only the dimeric form is capable of enhancing tubulin stability in cells. When phosphorylated, interacts with LAMTOR5/HBXIP; the resulting complex binds pro-CASP9, as well as active CASP9, but much less efficiently. Component of the chromosomal passenger complex (CPC) composed of at least BIRC5/survivin, CDCA8/borealin, INCENP, AURKB or AURKC; in the complex forms a triple-helix bundle-based subcomplex with INCENP and CDCA8. Interacts with JTB. Interacts (via BIR domain) with histone H3 phosphorylated at 'Thr-3' (H3pT3). Interacts with EVI5. Interacts with GTP-bound RAN in both the S and M phases of the cell cycle. Interacts with USP9X. Interacts with tubulin. Interacts with BIRC2/c-IAP1. The acetylated form at Lys-129 interacts with STAT3. The monomeric form deacetylated at Lys-129 interacts with XPO1/CRM1. The monomeric form interacts with XIAP/BIRC4. Both the dimeric and monomeric form can interact with DIABLO/SMAC. Interacts with BIRC6/bruce. Interacts with FBXL7; this interaction facilitates the polyubiquitination and subsequent proteasomal degradation of BIRC5 by the SCF(FBXL7) E3 ubiquitin-protein ligase complex. Ubiquitinated by the Cul9-RING ubiquitin-protein ligase complex, leading to its degradation. Ubiquitination is required for centrosomal targeting. Deubiquitinated by USP35 or USP38; leading to stabilization. Post-translationally, acetylation at Lys-129 results in its homodimerization, while deacetylation promotes the formation of monomers which heterodimerize with XPO1/CRM1 which facilitates its nuclear export. The acetylated form represses STAT3 transactivation. The dynamic equilibrium between its acetylation and deacetylation at Lys-129 determines its interaction with XPO1/CRM1, its subsequent subcellular localization, and its ability to inhibit STAT3 transactivation. In terms of processing, in vitro phosphorylation at Thr-117 by AURKB prevents interaction with INCENP and localization to mitotic chromosomes. Phosphorylation at Thr-48 by CK2 is critical for its mitotic and anti-apoptotic activities. Phosphorylation at Thr-34 by CDK15 is critical for its anti-apoptotic activity.

It is found in the cytoplasm. The protein resides in the nucleus. The protein localises to the chromosome. It localises to the centromere. Its subcellular location is the cytoskeleton. It is found in the spindle. The protein resides in the kinetochore. The protein localises to the midbody. Functionally, multitasking protein that has dual roles in promoting cell proliferation and preventing apoptosis. Component of a chromosome passage protein complex (CPC) which is essential for chromosome alignment and segregation during mitosis and cytokinesis. Acts as an important regulator of the localization of this complex; directs CPC movement to different locations from the inner centromere during prometaphase to midbody during cytokinesis and participates in the organization of the center spindle by associating with polymerized microtubules. Involved in the recruitment of CPC to centromeres during early mitosis via association with histone H3 phosphorylated at 'Thr-3' (H3pT3) during mitosis. The complex with RAN plays a role in mitotic spindle formation by serving as a physical scaffold to help deliver the RAN effector molecule TPX2 to microtubules. May counteract a default induction of apoptosis in G2/M phase. The acetylated form represses STAT3 transactivation of target gene promoters. May play a role in neoplasia. Inhibitor of CASP3 and CASP7. Essential for the maintenance of mitochondrial integrity and function. This chain is Baculoviral IAP repeat-containing protein 5 (Birc5), found in Mus musculus (Mouse).